Consider the following 233-residue polypeptide: Riboflavin kinase (233 aa).

The H-T-H motif-like stretch occupies residues 1-104; the sequence is MVRDIKTFKF…YKKIFDDEGT (104 aa). The interval 105 to 233 is riboflavin kinase; it reads IKIKGEVFSG…GDFVEVEVIL (129 aa). A CDP-binding site is contributed by 114-119; sequence GVGEGR. Threonine 143 and asparagine 145 together coordinate Mg(2+). Threonine 200 and glutamate 208 together coordinate FMN. 213–216 contacts CDP; that stretch reads VKLR.

The protein belongs to the archaeal riboflavin kinase family. It depends on Mg(2+) as a cofactor.

The enzyme catalyses riboflavin + CTP = CDP + FMN + H(+). It participates in cofactor biosynthesis; FMN biosynthesis; FMN from riboflavin (CTP route): step 1/1. In terms of biological role, catalyzes the CTP-dependent phosphorylation of riboflavin (vitamin B2) to form flavin mononucleotide (FMN). The polypeptide is Riboflavin kinase (ribK) (Archaeoglobus fulgidus (strain ATCC 49558 / DSM 4304 / JCM 9628 / NBRC 100126 / VC-16)).